The chain runs to 172 residues: Ribosome maturation factor RimM (172 aa).

The PRC barrel domain maps to 96 to 168 (EGEFYYHEII…RVDVEIPEGL (73 aa)).

It belongs to the RimM family. Binds ribosomal protein uS19.

It localises to the cytoplasm. An accessory protein needed during the final step in the assembly of 30S ribosomal subunit, possibly for assembly of the head region. Essential for efficient processing of 16S rRNA. May be needed both before and after RbfA during the maturation of 16S rRNA. It has affinity for free ribosomal 30S subunits but not for 70S ribosomes. The chain is Ribosome maturation factor RimM from Streptococcus gordonii (strain Challis / ATCC 35105 / BCRC 15272 / CH1 / DL1 / V288).